The chain runs to 425 residues: COBRA-like protein 4 (425 aa).

The first 27 residues, 1 to 27 (MAIGVGGCCAVLLAAALLFSSPATTYA), serve as a signal peptide directing secretion. 5 N-linked (GlcNAc...) asparagine glycosylation sites follow: N36, N163, N171, N319, and N352.

This sequence belongs to the COBRA family.

This chain is COBRA-like protein 4 (BC1L9), found in Oryza sativa subsp. japonica (Rice).